A 305-amino-acid polypeptide reads, in one-letter code: Probable DNA-invertase y4cG (305 aa).

In terms of domain architecture, Resolvase/invertase-type recombinase catalytic spans 15–148 (RLIGYARVST…SGMQAAKARG (134 aa)). Residue S23 is the O-(5'-phospho-DNA)-serine intermediate of the active site.

Belongs to the site-specific recombinase resolvase family.

The sequence is that of Probable DNA-invertase y4cG from Sinorhizobium fredii (strain NBRC 101917 / NGR234).